Consider the following 416-residue polypeptide: Methylthioribose-1-phosphate isomerase (416 aa).

Asp-280 serves as the catalytic Proton donor.

The protein belongs to the eIF-2B alpha/beta/delta subunits family. MtnA subfamily.

The protein resides in the cytoplasm. It is found in the nucleus. The enzyme catalyses 5-(methylsulfanyl)-alpha-D-ribose 1-phosphate = 5-(methylsulfanyl)-D-ribulose 1-phosphate. It functions in the pathway amino-acid biosynthesis; L-methionine biosynthesis via salvage pathway; L-methionine from S-methyl-5-thio-alpha-D-ribose 1-phosphate: step 1/6. In terms of biological role, catalyzes the interconversion of methylthioribose-1-phosphate (MTR-1-P) into methylthioribulose-1-phosphate (MTRu-1-P). The sequence is that of Methylthioribose-1-phosphate isomerase from Candida albicans (strain SC5314 / ATCC MYA-2876) (Yeast).